The sequence spans 1267 residues: Probable cation-transporting ATPase catp-6 (1267 aa).

The Extracellular portion of the chain corresponds to 1–32; it reads MVEAGGARRHRMTLESGDHTLTLFAYRTGPFR. The helical transmembrane segment at 33–53 threads the bilayer; that stretch reads TILFYALTVLTLGIFRLILHW. Residues 54–189 lie on the Cytoplasmic side of the membrane; sequence KQKWDVKMRM…RNEIVVQLRP (136 aa). A helical membrane pass occupies residues 190-210; sequence ILYLLVMEVITPFYVFQIFSV. Over 211 to 217 the chain is Extracellular; the sequence is TVWYNDE. The chain crosses the membrane as a helical span at residues 218-238; that stretch reads YAYYASLIVILSLGSIVMDVY. Residues 239–390 are Cytoplasmic-facing; sequence QIRTQEIRLR…DFRFTKDLFK (152 aa). Residues 391-411 traverse the membrane as a helical segment; that stretch reads FILFLACISGCGFIYTIIVMI. At 412 to 424 the chain is on the extracellular side; sequence MRGNTLRRIIVRS. A helical transmembrane segment spans residues 425-445; that stretch reads LDIITITVPPALPAAMSVGII. Over 446 to 950 the chain is Cytoplasmic; the sequence is NAQLRLKKKE…VTSFGIFKYM (505 aa). Catalysis depends on D476, which acts as the 4-aspartylphosphate intermediate. Residues D891 and D895 each coordinate Mg(2+). A helical membrane pass occupies residues 951–971; it reads AGYSLTQFVTVMHLYWISNIL. Residues 972–976 lie on the Extracellular side of the membrane; the sequence is TDGQF. The helical transmembrane segment at 977–997 threads the bilayer; sequence MYIDMFLITMFALLFGNTPAF. Residues 998-1013 lie on the Cytoplasmic side of the membrane; sequence YRLAHTPPPTRLLSIA. A helical membrane pass occupies residues 1014–1034; sequence SMTSVVGQLIIIGVVQFIVFF. Residues 1035–1058 are Extracellular-facing; that stretch reads STSQQPWFTPYQPPVDDEVEDKRS. A helical membrane pass occupies residues 1059 to 1079; that stretch reads MQGTALFCVSMFQYIILALVY. Residues 1080–1097 are Cytoplasmic-facing; it reads SKGPPFRGNLWSNKPMCA. A helical membrane pass occupies residues 1098-1118; the sequence is LTIFATLLCLFIVIWPTELVL. Residues 1119-1132 lie on the Extracellular side of the membrane; the sequence is KTLGNVELPSLTFR. Residues 1133 to 1153 form a helical membrane-spanning segment; it reads IFIVIVGAVNAAVSYGFETLF. Over 1154–1267 the chain is Cytoplasmic; sequence VDFFLLGYWE…EEPEKLERTY (114 aa). Residues 1232–1256 are disordered; the sequence is ERLISRIGGEPTWLTNPIPPHSLSE.

The protein belongs to the cation transport ATPase (P-type) (TC 3.A.3) family. Type V subfamily.

It localises to the membrane. It catalyses the reaction ATP + H2O = ADP + phosphate + H(+). This chain is Probable cation-transporting ATPase catp-6, found in Caenorhabditis elegans.